The following is a 145-amino-acid chain: D-aminoacyl-tRNA deacylase (145 aa).

Positions glycine 137–proline 138 match the Gly-cisPro motif, important for rejection of L-amino acids motif.

This sequence belongs to the DTD family. As to quaternary structure, homodimer.

It localises to the cytoplasm. The enzyme catalyses glycyl-tRNA(Ala) + H2O = tRNA(Ala) + glycine + H(+). The catalysed reaction is a D-aminoacyl-tRNA + H2O = a tRNA + a D-alpha-amino acid + H(+). Its function is as follows. An aminoacyl-tRNA editing enzyme that deacylates mischarged D-aminoacyl-tRNAs. Also deacylates mischarged glycyl-tRNA(Ala), protecting cells against glycine mischarging by AlaRS. Acts via tRNA-based rather than protein-based catalysis; rejects L-amino acids rather than detecting D-amino acids in the active site. By recycling D-aminoacyl-tRNA to D-amino acids and free tRNA molecules, this enzyme counteracts the toxicity associated with the formation of D-aminoacyl-tRNA entities in vivo and helps enforce protein L-homochirality. This is D-aminoacyl-tRNA deacylase from Alcanivorax borkumensis (strain ATCC 700651 / DSM 11573 / NCIMB 13689 / SK2).